Here is a 110-residue protein sequence, read N- to C-terminus: Flagellar hook-basal body complex protein FliE (110 aa).

The protein belongs to the FliE family.

The protein resides in the bacterial flagellum basal body. The polypeptide is Flagellar hook-basal body complex protein FliE (Bordetella petrii (strain ATCC BAA-461 / DSM 12804 / CCUG 43448)).